A 255-amino-acid polypeptide reads, in one-letter code: tRNA (guanine-N(1)-)-methyltransferase (255 aa).

Residues G119 and 139 to 144 (IGDFIL) each bind S-adenosyl-L-methionine.

Belongs to the RNA methyltransferase TrmD family. As to quaternary structure, homodimer.

It is found in the cytoplasm. The catalysed reaction is guanosine(37) in tRNA + S-adenosyl-L-methionine = N(1)-methylguanosine(37) in tRNA + S-adenosyl-L-homocysteine + H(+). Functionally, specifically methylates guanosine-37 in various tRNAs. This is tRNA (guanine-N(1)-)-methyltransferase from Pseudoalteromonas translucida (strain TAC 125).